A 479-amino-acid chain; its full sequence is Transcription factor CP2-like protein 1 (479 aa).

A mediate transcriptional repression region spans residues 1–52 (MLFWHTQPEHYNQHNSGSYLRDVLALPIFKQEEPQLSPENGARLPPLQYVLC). One can recognise a Grh/CP2 DB domain in the interval 43 to 280 (RLPPLQYVLC…PSPSYNGSPN (238 aa)). Disordered regions lie at residues 219 to 248 (KPKG…YQPS) and 260 to 301 (WPDV…LPLG). The span at 221-245 (KGADRKQKTDREKMEKRTAQEKEKY) shows a compositional bias: basic and acidic residues. The interval 261 to 365 (PDVPYQANNT…IRLFNAIKGR (105 aa)) is SAM2-like domain. Residues 266–292 (QANNTPSPSYNGSPNSFGLREGNSSPN) are compositionally biased toward polar residues.

Belongs to the grh/CP2 family. CP2 subfamily. In terms of assembly, forms homohexamers via its SAM-like domain. Interacts with Mta1; which is indispensable for Tfcp2l1-mediated self-renewal-promoting effect and endoderm-inhibiting action. Highly expressed in placenta, testis, small intestine, kidney and stomach. Low levels of expression in lung, mesenteric lymph nodes, muscle, ovary, and thymus. No expression was detected in brain, heart, liver, and spleen. Expressed in eccrine glands in the palm. Expression is prominent in both kidney collecting ducts intercalated (IC) and principal (PC) cells. Also expressed in the thick limb of Henle and connecting segments of the nephron.

It localises to the nucleus. In terms of biological role, transcription factor that facilitates establishment and maintenance of pluripotency in embryonic stem cells (ESCs). With Klf2, acts as the major effector of self-renewal that mediates induction of pluripotency downstream of LIF/Stat3 and Wnt/beta-catenin signaling. Required for normal duct development in the salivary gland and kidney. Coordinates the development of the kidney collecting ducts intercalated (IC) and principal (PC) cells, which regulate acid-base and salt-water homeostasis, respectively. Regulates the expression of IC genes including subunits B1 and D2 of the V-ATPase complex, Oxgr1, Ca12, Slc4a1, Aqp6 and IC-specific transcription factor Foxi1. Also regulates the expression of Jag1 and subsequent notch signaling in the collecting duct. Jag1 initiates notch signaling in PCs but inhibits notch signaling in ICs. Acts as a transcriptional suppressor that may suppress UBP1-mediated transcriptional activation. Modulates the placental expression of CYP11A1. The sequence is that of Transcription factor CP2-like protein 1 (Tfcp2l1) from Mus musculus (Mouse).